A 348-amino-acid chain; its full sequence is Phospho-2-dehydro-3-deoxyheptonate aldolase, Trp-sensitive (348 aa).

Belongs to the class-I DAHP synthase family.

The catalysed reaction is D-erythrose 4-phosphate + phosphoenolpyruvate + H2O = 7-phospho-2-dehydro-3-deoxy-D-arabino-heptonate + phosphate. The protein operates within metabolic intermediate biosynthesis; chorismate biosynthesis; chorismate from D-erythrose 4-phosphate and phosphoenolpyruvate: step 1/7. Functionally, stereospecific condensation of phosphoenolpyruvate (PEP) and D-erythrose-4-phosphate (E4P) giving rise to 3-deoxy-D-arabino-heptulosonate-7-phosphate (DAHP). In Salmonella typhi, this protein is Phospho-2-dehydro-3-deoxyheptonate aldolase, Trp-sensitive (aroH).